Consider the following 552-residue polypeptide: Carotenoid cleavage dioxygenase 8 homolog A, chloroplastic (552 aa).

The transit peptide at 1–43 (MATSLTLIATPCTAPRSSSSFALAPRLPPRCSNATAARRRAVR) directs the protein to the chloroplast. The segment at 32-73 (SNATAARRRAVRATTLQSDQEPAGSGDSGATTTKLSASTSVR) is disordered. A compositionally biased stretch (polar residues) spans 59 to 72 (SGATTTKLSASTSV). Fe cation-binding residues include histidine 239, histidine 289, histidine 356, and histidine 543.

It belongs to the carotenoid oxygenase family. The cofactor is Fe(2+). Highly expressed in panicles, inflorescences and parenchyma cells of the root stele, and at lower levels in shoot apex, leaf buds and xylem parenchyma cells of the stem.

Its subcellular location is the plastid. The protein localises to the chloroplast. Functionally, may be involved in strigolactones biosynthesis. The sequence is that of Carotenoid cleavage dioxygenase 8 homolog A, chloroplastic (CCD8A) from Oryza sativa subsp. japonica (Rice).